We begin with the raw amino-acid sequence, 61 residues long: Metallothionein-1 (61 aa).

At Met1 the chain carries N-acetylmethionine. The interval 1–29 (MDPNCSCATGVSCTCADSCKCKECKCTSC) is beta. 20 residues coordinate a divalent metal cation: Cys5, Cys7, Cys13, Cys15, Cys19, Cys21, Cys24, Cys26, Cys29, Cys33, Cys34, Cys36, Cys37, Cys41, Cys44, Cys48, Cys50, Cys57, Cys59, and Cys60. The segment at 30–61 (KKSCCSCCPVGCAKCAQGCVCKGASEKCNCCA) is alpha.

This sequence belongs to the metallothionein superfamily. Type 1 family.

Metallothioneins have a high content of cysteine residues that bind various heavy metals; these proteins are transcriptionally regulated by both heavy metals and glucocorticoids. This chain is Metallothionein-1 (MT1), found in Chlorocebus aethiops (Green monkey).